The sequence spans 156 residues: Type II secretion system core protein G (156 aa).

Residues 1–22 constitute a propeptide, leader sequence; it reads MQQSQRGCGQNSYGQSGYRQRG. Phenylalanine 23 carries the post-translational modification N-methylphenylalanine. A helical transmembrane segment spans residues 23–43; it reads FTLLEIMVVIVILGVLASLVV.

It belongs to the GSP G family. As to quaternary structure, type II secretion system is composed of four main components: the outer membrane complex, the inner membrane complex, the cytoplasmic secretion ATPase and the periplasm-spanning pseudopilus. Forms homomultimers. In terms of processing, cleaved by the prepilin peptidase. Methylated by prepilin peptidase at the amino group of the N-terminal phenylalanine once the leader sequence is cleaved.

The protein resides in the cell inner membrane. Functionally, core component of the type II secretion system required for the energy-dependent secretion of extracellular factors such as proteases and toxins from the periplasm. Pseudopilin (pilin-like) protein that polymerizes to form the pseudopilus. Further polymerization triggers pseudopilus growth. This chain is Type II secretion system core protein G (outG), found in Pectobacterium carotovorum subsp. carotovorum (Erwinia carotovora subsp. carotovora).